Here is a 204-residue protein sequence, read N- to C-terminus: ATP-dependent Clp protease proteolytic subunit (204 aa).

The Nucleophile role is filled by S101. Residue H126 is part of the active site.

The protein belongs to the peptidase S14 family. Fourteen ClpP subunits assemble into 2 heptameric rings which stack back to back to give a disk-like structure with a central cavity, resembling the structure of eukaryotic proteasomes.

Its subcellular location is the cytoplasm. The catalysed reaction is Hydrolysis of proteins to small peptides in the presence of ATP and magnesium. alpha-casein is the usual test substrate. In the absence of ATP, only oligopeptides shorter than five residues are hydrolyzed (such as succinyl-Leu-Tyr-|-NHMec, and Leu-Tyr-Leu-|-Tyr-Trp, in which cleavage of the -Tyr-|-Leu- and -Tyr-|-Trp bonds also occurs).. In terms of biological role, cleaves peptides in various proteins in a process that requires ATP hydrolysis. Has a chymotrypsin-like activity. Plays a major role in the degradation of misfolded proteins. In Deinococcus radiodurans (strain ATCC 13939 / DSM 20539 / JCM 16871 / CCUG 27074 / LMG 4051 / NBRC 15346 / NCIMB 9279 / VKM B-1422 / R1), this protein is ATP-dependent Clp protease proteolytic subunit.